Consider the following 192-residue polypeptide: Rho-related protein racC (192 aa).

Residue 13 to 20 (GDGAVGKT) coordinates GTP. The Effector region motif lies at 35–43 (YIPTVFDNY). GTP-binding positions include 60-64 (DTAGQ) and 118-121 (TKLD). Position 189 is a cysteine methyl ester (cysteine 189). A lipid anchor (S-geranylgeranyl cysteine) is attached at cysteine 189. A propeptide spans 190–192 (IVM) (removed in mature form).

It belongs to the small GTPase superfamily. Rho family. In terms of assembly, interacts with pakB.

It is found in the cell membrane. The sequence is that of Rho-related protein racC (racC) from Dictyostelium discoideum (Social amoeba).